A 155-amino-acid chain; its full sequence is Endoribonuclease YbeY (155 aa).

Zn(2+) is bound by residues His-114, His-118, and His-124.

The protein belongs to the endoribonuclease YbeY family. Zn(2+) serves as cofactor.

The protein resides in the cytoplasm. Its function is as follows. Single strand-specific metallo-endoribonuclease involved in late-stage 70S ribosome quality control and in maturation of the 3' terminus of the 16S rRNA. The chain is Endoribonuclease YbeY from Escherichia coli O157:H7.